Here is a 158-residue protein sequence, read N- to C-terminus: Scytalone dehydratase-like protein CPUR_05428 (158 aa).

2 residues coordinate substrate: Tyr-24 and Tyr-44. Catalysis depends on residues His-79 and His-104.

The protein belongs to the scytalone dehydratase family.

It functions in the pathway pigment biosynthesis. In terms of biological role, scytalone dehydratase-like protein; part of the ergochrome gene cluster responsible for the typical purple-black color of the ergot sclerotia. The ergochrome gene cluster produces several ergot pigments including the yellow ergochrome secalonic acid and its derivatives, as well as the red anthraquinones endocrocin and clavorubin. The pathway begins with the synthesis of atrochrysone thioester by the polyketide synthase (PKS) CPUR_05437. The atrochrysone carboxyl ACP thioesterase CPUR_05436 then breaks the thioester bond and releases the atrochrysone carboxylic acid from CPUR_05437. The atrochrysone carboxylic acid is then converted to atrochrysone which is further transformed into emodin anthrone. The next step is performed by the anthrone oxygenase CPUR_05434 that catalyzes the oxidation of emodinanthrone to emodin. Emodin is further modified to yield monodictyphenone via several steps involving CPUR_05427, CPUR_05428, CPUR_05429 and CPUR_05430. The short chain dehydrogenase/reductase CPUR_05418 then catalyzes the C-5 ketoreduction to give the xanthone skeleton of the monomeric units. Ergochromes formation requires further dimerization steps of different xanthone units, probably catalyzed by the cytochrome P450 monooxygenase CPUR_05419. CPUR_05425, CPUR_05426 and CPUR_05431 are unique to Claviceps, thus it is likely that they are involved in further modification of xanthone units or in their dimerization. The yellow ergochromes and the red anthraquinone pigments endocrocin and clavorubin are products from the same PKS derived precursors and the latter are likely shunt products in the pathway of xanthone biosynthesis. It is proposed that atrochrysone carboxylic acid released from the PKS CPUR_05437 can also be converted to endocrocin anthrone which is further oxidized into endocrocin by CPUR_05435. Endocrocin could be then modified to clavorubin, possibly by CPUR_05423 and CPUR_05431. Clavorubin is the principal anthraquinone metabolite produced by the cluster with a much higher yield compared to endocrocin. This Claviceps purpurea (strain 20.1) (Ergot fungus) protein is Scytalone dehydratase-like protein CPUR_05428.